A 505-amino-acid polypeptide reads, in one-letter code: Lysine--tRNA ligase (505 aa).

Mg(2+)-binding residues include glutamate 415 and glutamate 422.

The protein belongs to the class-II aminoacyl-tRNA synthetase family. Homodimer. Mg(2+) serves as cofactor.

Its subcellular location is the cytoplasm. It catalyses the reaction tRNA(Lys) + L-lysine + ATP = L-lysyl-tRNA(Lys) + AMP + diphosphate. This Xanthomonas axonopodis pv. citri (strain 306) protein is Lysine--tRNA ligase.